Here is a 232-residue protein sequence, read N- to C-terminus: Large ribosomal subunit protein uL1 (232 aa).

It belongs to the universal ribosomal protein uL1 family. As to quaternary structure, part of the 50S ribosomal subunit.

In terms of biological role, binds directly to 23S rRNA. The L1 stalk is quite mobile in the ribosome, and is involved in E site tRNA release. Its function is as follows. Protein L1 is also a translational repressor protein, it controls the translation of the L11 operon by binding to its mRNA. The chain is Large ribosomal subunit protein uL1 from Chlamydia trachomatis serovar D (strain ATCC VR-885 / DSM 19411 / UW-3/Cx).